Here is an 896-residue protein sequence, read N- to C-terminus: NET1-associated nuclear protein 1 (896 aa).

WD repeat units follow at residues 295-334 (WHID…QQFL), 490-542 (LQDP…TNWN), 552-595 (GISV…SNWC), and 605-645 (NHFS…ESLE).

In terms of assembly, interacts with snoRNA U3. Interacts with MPP10. Component of the ribosomal small subunit (SSU) processome composed of at least 40 protein subunits and snoRNA U3. In the absence of snoRNA3, forms a complex with other t-UTPs. This complex can associate with pre-18S ribosomal RNAs.

The protein localises to the nucleus. It is found in the nucleolus. Functionally, involved in nucleolar processing of pre-18S ribosomal RNA. Required for optimal pre-ribosomal RNA transcription by RNA polymerase I together with a subset of U3 proteins required for transcription (t-UTPs). This chain is NET1-associated nuclear protein 1 (NAN1), found in Saccharomyces cerevisiae (strain ATCC 204508 / S288c) (Baker's yeast).